We begin with the raw amino-acid sequence, 113 residues long: Hydrogenase maturation factor HybF (113 aa).

H2 and E3 together coordinate Ni(2+). The Zn(2+) site is built by C73, C76, C89, and C92.

The protein belongs to the HypA/HybF family. HybF subfamily.

Functionally, involved in the maturation of [NiFe] hydrogenases. Required for nickel insertion into the metal center of the hydrogenase. The polypeptide is Hydrogenase maturation factor HybF (Proteus vulgaris).